A 369-amino-acid polypeptide reads, in one-letter code: Glutamate 5-kinase (369 aa).

Lysine 9 lines the ATP pocket. Residues serine 49, aspartate 136, and asparagine 148 each contribute to the substrate site. ATP is bound by residues 168–169 (TD) and 210–216 (TGGMLTK). Positions 275-355 (QGSIWVDKGA…KGVLIYRDDW (81 aa)) constitute a PUA domain.

This sequence belongs to the glutamate 5-kinase family.

The protein resides in the cytoplasm. The catalysed reaction is L-glutamate + ATP = L-glutamyl 5-phosphate + ADP. It participates in amino-acid biosynthesis; L-proline biosynthesis; L-glutamate 5-semialdehyde from L-glutamate: step 1/2. In terms of biological role, catalyzes the transfer of a phosphate group to glutamate to form L-glutamate 5-phosphate. This chain is Glutamate 5-kinase, found in Streptococcus pneumoniae serotype 4 (strain ATCC BAA-334 / TIGR4).